A 1399-amino-acid chain; its full sequence is DNA-directed RNA polymerase subunit beta' (1399 aa).

Zn(2+)-binding residues include Cys-70, Cys-72, Cys-85, and Cys-88. Mg(2+) contacts are provided by Asp-460, Asp-462, and Asp-464. Residues Cys-814, Cys-888, Cys-895, and Cys-898 each coordinate Zn(2+).

The protein belongs to the RNA polymerase beta' chain family. In terms of assembly, the RNAP catalytic core consists of 2 alpha, 1 beta, 1 beta' and 1 omega subunit. When a sigma factor is associated with the core the holoenzyme is formed, which can initiate transcription. Mg(2+) is required as a cofactor. The cofactor is Zn(2+).

It carries out the reaction RNA(n) + a ribonucleoside 5'-triphosphate = RNA(n+1) + diphosphate. Its function is as follows. DNA-dependent RNA polymerase catalyzes the transcription of DNA into RNA using the four ribonucleoside triphosphates as substrates. The protein is DNA-directed RNA polymerase subunit beta' of Pseudomonas fluorescens (strain ATCC BAA-477 / NRRL B-23932 / Pf-5).